The chain runs to 306 residues: Agmatinase (306 aa).

Histidine 126, aspartate 149, histidine 151, aspartate 153, aspartate 230, and aspartate 232 together coordinate Mn(2+).

It belongs to the arginase family. Agmatinase subfamily. The cofactor is Mn(2+).

The enzyme catalyses agmatine + H2O = urea + putrescine. It participates in amine and polyamine biosynthesis; putrescine biosynthesis via agmatine pathway; putrescine from agmatine: step 1/1. Functionally, catalyzes the formation of putrescine from agmatine. The chain is Agmatinase from Serratia proteamaculans (strain 568).